The sequence spans 273 residues: Type II pantothenate kinase (273 aa).

D8–K15 contributes to the ATP binding site. E76 serves as the catalytic Proton acceptor. ATP is bound by residues T105, G127 to M131, F143, and S230.

It belongs to the type II pantothenate kinase family. In terms of assembly, homodimer.

Its subcellular location is the cytoplasm. The enzyme catalyses (R)-pantothenate + ATP = (R)-4'-phosphopantothenate + ADP + H(+). The protein operates within cofactor biosynthesis; coenzyme A biosynthesis; CoA from (R)-pantothenate: step 1/5. Catalyzes the phosphorylation of pantothenate (Pan), the first step in CoA biosynthesis. This is Type II pantothenate kinase from Bacillus cereus (strain G9842).